The chain runs to 398 residues: ATP-dependent RNA helicase eIF4A (398 aa).

The Q motif motif lies at 25 to 53; that stretch reads DSFDAMNLRAELLRGVYAYGFERPSAIQQ. In terms of domain architecture, Helicase ATP-binding spans 56–226; sequence IMPVIKGSDV…TKFMRDPVRI (171 aa). 69–76 contacts ATP; that stretch reads AQSGTGKT. A DEAD box motif is present at residues 174 to 177; it reads DEAD. The region spanning 237–398 is the Helicase C-terminal domain; the sequence is GIKQFYIAVE…EMPMNVADLI (162 aa).

This sequence belongs to the DEAD box helicase family. eIF4A subfamily. As to quaternary structure, component of the eIF4F complex, which composition varies with external and internal environmental conditions. It is composed of at least eIF4A, eIF4E and eIF4G.

It is found in the cytoplasm. The catalysed reaction is ATP + H2O = ADP + phosphate + H(+). ATP-dependent RNA helicase which is a subunit of the eIF4F complex involved in cap recognition and is required for mRNA binding to ribosome. In the current model of translation initiation, eIF4A unwinds RNA secondary structures in the 5'-UTR of mRNAs which is necessary to allow efficient binding of the small ribosomal subunit, and subsequent scanning for the initiator codon. The sequence is that of ATP-dependent RNA helicase eIF4A (TIF1) from Coccidioides immitis (strain RS) (Valley fever fungus).